A 442-amino-acid chain; its full sequence is Small RNA 2'-O-methyltransferase (442 aa).

The S-adenosyl-L-methionine site is built by G125 and D151. Mg(2+)-binding residues include E209, E212, H213, and H260.

It belongs to the methyltransferase superfamily. HEN1 family. It depends on Mg(2+) as a cofactor. In terms of tissue distribution, broadly expressed in the germline and somatic tissues in both hermaphrodites and males.

It localises to the cytoplasm. The protein localises to the nucleus. The protein resides in the nucleoplasm. It is found in the cytoplasmic granule. The enzyme catalyses small RNA 3'-end nucleotide + S-adenosyl-L-methionine = small RNA 3'-end 2'-O-methylnucleotide + S-adenosyl-L-homocysteine + H(+). In terms of biological role, methyltransferase that adds a 2'-O-methyl group at the 3'-end of PIWI-interacting RNAs (piRNAs) and small interfering RNAs (siRNAs) which are classes of regulatory RNAs that are involved in gene silencing in endogenous RNA interference (RNAi) pathways. Methylation protects the 3'-end of small RNAs from tailing and trimming and could constitute a recognition signal for appropriate argonaute machineries. Methylates and stabilizes 26G-siRNAs (a class of 26 nucleotide siRNAs that possess a monophosphorylated guanine residue at the 5'-end) when they are bound by argonaute protein ergo-1. This occurs in the female germline and embryo, but not in the male germline. Does not methylate 26G-siRNAs bound by argonaute proteins alg-3 or alg-4. Methylates and stabilizes 21U-piRNAs, which are a class of 21 nucleotide piRNAs that possess a uracil residue at the 5'-end, in the male and female germline. In addition, may play a role in exogenous RNAi (exoRNAi) pathways in the germline. In Caenorhabditis elegans, this protein is Small RNA 2'-O-methyltransferase.